A 471-amino-acid polypeptide reads, in one-letter code: MSQNIGKISQVIGAVIDVEFEPGKLPEIYHALRVTNPAIDDRENNLVLEVAQHLGENSVRTIAMDSTDGLKRGQAVIDTGKQICAPVGRKTLGRIMNVIGEPVDEMGPIGNEKEYGIHREAPAFEDQSTKVEAFTTGIKVVDLLAPYARGGKIGLFGGAGVGKTVLIMELINNIAKQHGGYSVFAGVGERTREGNDLWMEMKESGVLDKAALVYGQMNEPPGARARVALTALSVAEYFRDEENQDVLLFIDNIFRFTQAGSEVSALLGRIPSAVGYQPTLATEMGELQERITSTKKGSITSVQAIYVPADDLTDPAPATAFAHLDATTVLSRQIAELGIYPAVDPLDSTSRILDPQVIGEEHYAVARSVQYVLQKYKDLQDIIAILGMDELSEEDKLVVARARKIQRFLSQPFHVAEAFTGSPGKYVELKDTIKGFQEIVAGKHDNLPEQAFYMVGSIEEAIEKAAKLAAV.

Position 157–164 (157–164 (GGAGVGKT)) interacts with ATP.

Belongs to the ATPase alpha/beta chains family. F-type ATPases have 2 components, CF(1) - the catalytic core - and CF(0) - the membrane proton channel. CF(1) has five subunits: alpha(3), beta(3), gamma(1), delta(1), epsilon(1). CF(0) has three main subunits: a(1), b(2) and c(9-12). The alpha and beta chains form an alternating ring which encloses part of the gamma chain. CF(1) is attached to CF(0) by a central stalk formed by the gamma and epsilon chains, while a peripheral stalk is formed by the delta and b chains.

The protein resides in the cell inner membrane. It catalyses the reaction ATP + H2O + 4 H(+)(in) = ADP + phosphate + 5 H(+)(out). In terms of biological role, produces ATP from ADP in the presence of a proton gradient across the membrane. The catalytic sites are hosted primarily by the beta subunits. The sequence is that of ATP synthase subunit beta from Trichlorobacter lovleyi (strain ATCC BAA-1151 / DSM 17278 / SZ) (Geobacter lovleyi).